The sequence spans 240 residues: MKLEFKKSISNKVIIILGAMFVFLFLLGYFLLVGIDKVSNVTPEMFFFSSYTVATQFGLMLFSFVIAFFINREYSNKNILFYKLIGENIYTFFYKKIAVLFLECFAFITLGLLIISLMYHDFSHFALLLFLFSAVILQYILIIGTISVLCPNILISIGVSIVYWMTSVILVAISNKTFGFIAPFEAGNTMYPRIERVLQSDNMTLGSNDVLFIILYLVSIIIINAIVLRFSKTRWIKMGL.

6 consecutive transmembrane segments (helical) span residues 13–33 (VIII…FLLV), 50–70 (SYTV…AFFI), 97–117 (IAVL…IISL), 126–146 (ALLL…IGTI), 153–173 (ILIS…LVAI), and 210–230 (VLFI…VLRF).

As to quaternary structure, the complex is composed of 2 ATP-binding proteins (YydI), two transmembrane proteins (YydJ).

It localises to the cell membrane. Functionally, suggested to be part of an ABC transporter complex YydIJ involved in export of the modified peptide YydF. The protein is Probable peptide export permease protein YydJ (yydJ) of Bacillus subtilis (strain 168).